Consider the following 398-residue polypeptide: Unsaturated chondroitin disaccharide hydrolase (398 aa).

The active-site Nucleophile is Asp115. The substrate site is built by Asp115, Asp175, Gly233, Thr235, Arg247, Trp251, Ser365, and Ser368. Residue Asp175 is the Proton donor of the active site.

It belongs to the glycosyl hydrolase 88 family. As to quaternary structure, monomer.

The enzyme catalyses beta-D-4-deoxy-Delta(4)-GlcpA-(1-&gt;3)-beta-D-GalpNAc6S + H2O = N-acetyl-beta-D-galactosamine 6-sulfate + 5-dehydro-4-deoxy-D-glucuronate. In terms of biological role, catalyzes the hydrolysis of unsaturated hyaluronate and chondroitin disaccharides. Also degrades unsaturated heparin disaccharides. Releases 4-deoxy-4,5-didehydro D-glucuronic acid or 4-deoxy-4,5-didehydro L-iduronic acid from chondroitin disaccharides, hyaluronan disaccharides and heparin disaccharides and cleaves both glycosidic (1-&gt;3) and (1-&gt;4) bonds. Prefers sulfated glycosaminoglycans compared to unsulfated glycosaminoglycans. Probably required for mammalian cells invasion through the degradation of extracellular sulfated glycosaminoglycans such as chondroitin and hyaluronan. The sequence is that of Unsaturated chondroitin disaccharide hydrolase from Streptococcus agalactiae serotype III (strain NEM316).